The chain runs to 295 residues: Small ribosomal subunit protein uS2 (295 aa).

Positions 247-295 (TDKGLTSKNVSKLKQTKKFSKTKNIDEETNTEFEQALNDADENKNSDNA) are disordered.

The protein belongs to the universal ribosomal protein uS2 family.

This Rickettsia conorii (strain ATCC VR-613 / Malish 7) protein is Small ribosomal subunit protein uS2.